Consider the following 818-residue polypeptide: Probable beta-glucosidase I (818 aa).

N-linked (GlcNAc...) asparagine glycosylation occurs at Asn-176. Asp-204 is a catalytic residue. The PA14 domain maps to 374–534 (DGKPGFTFRV…SQEELISNAV (161 aa)). Residues Asn-453 and Asn-472 are each glycosylated (N-linked (GlcNAc...) asparagine).

The protein belongs to the glycosyl hydrolase 3 family.

The protein resides in the secreted. It catalyses the reaction Hydrolysis of terminal, non-reducing beta-D-glucosyl residues with release of beta-D-glucose.. The protein operates within glycan metabolism; cellulose degradation. Its function is as follows. Beta-glucosidases are one of a number of cellulolytic enzymes involved in the degradation of cellulosic biomass. Catalyzes the last step releasing glucose from the inhibitory cellobiose. The chain is Probable beta-glucosidase I (bglI) from Aspergillus niger (strain ATCC MYA-4892 / CBS 513.88 / FGSC A1513).